A 101-amino-acid polypeptide reads, in one-letter code: Urease subunit beta (101 aa).

The protein belongs to the urease beta subunit family. Heterotrimer of UreA (gamma), UreB (beta) and UreC (alpha) subunits. Three heterotrimers associate to form the active enzyme.

It localises to the cytoplasm. The catalysed reaction is urea + 2 H2O + H(+) = hydrogencarbonate + 2 NH4(+). It participates in nitrogen metabolism; urea degradation; CO(2) and NH(3) from urea (urease route): step 1/1. This is Urease subunit beta from Stutzerimonas stutzeri (strain A1501) (Pseudomonas stutzeri).